A 352-amino-acid polypeptide reads, in one-letter code: Ion-translocating oxidoreductase complex subunit D (352 aa).

5 consecutive transmembrane segments (helical) span residues 20–40 (IMLL…WFFG), 42–62 (GTLV…ALVL), 78–109 (ALLT…VIIA), 123–143 (PAMI…TSWL), and 148–168 (IAVN…GHTA). FMN phosphoryl threonine is present on T187. 5 helical membrane passes run 214–234 (ILAG…GVWL), 242–262 (WHIP…GWLF), 267–287 (LAAP…FFIL), 301–321 (LIFG…GGYP), and 322–342 (DGVA…DYYT).

Belongs to the NqrB/RnfD family. The complex is composed of six subunits: RsxA, RsxB, RsxC, RsxD, RsxE and RsxG. FMN is required as a cofactor.

The protein localises to the cell inner membrane. Its function is as follows. Part of a membrane-bound complex that couples electron transfer with translocation of ions across the membrane. Required to maintain the reduced state of SoxR. In Escherichia coli O139:H28 (strain E24377A / ETEC), this protein is Ion-translocating oxidoreductase complex subunit D.